The chain runs to 449 residues: MKPLSLLLAVASALGTAVSAGPAVIECWMVEDAGGGRLAKKPAALLLRQGPGTPPPRPDLEPELYLKVHDPAGTLQAAVRRYPSDAPPPHCELSRFIPLPASARWARGLTPGRSCPRALDGAWLMASVLSPIFSLSCLLRPQSEPQPEPALFTSATAVLTVLTYSPIAQIQLGQDALLDLRFAYMPSISEAAASLAPGPPPFGLEWRRQHLGKGHLLLAATPGLHEQMPAAQDGAVAFAAWDDDDPWGPWTGNGTLWLPAVQPFQEGTYLATVHLPYLQGQVALELSVQKPPKISLTPAPLVWAAPGEAPPELLCLVSRFYPAKGLEVEWELRGGPEGSFQKAEGQSWLSALRHHSDGSVSLSAHLQPIPVTAKHHGARYACRVHHPTLPTLGRSAEVTLEVAGLSGPSLEDSVGLFLSAFLLLGLIKALGWVAASRSTSKDPKEKKAQ.

A signal peptide spans 1 to 20 (MKPLSLLLAVASALGTAVSA). Topologically, residues 21–413 (GPAVIECWMV…GLSGPSLEDS (393 aa)) are lumenal. A disulfide bridge links Cys27 with Cys91. N-linked (GlcNAc...) asparagine glycosylation is present at Asn253. In terms of domain architecture, Ig-like C1-type spans 292–399 (PKISLTPAPL…PTLGRSAEVT (108 aa)). The cysteines at positions 315 and 382 are disulfide-linked. Residues 414–434 (VGLFLSAFLLLGLIKALGWVA) form a helical membrane-spanning segment. Residues 435-449 (ASRSTSKDPKEKKAQ) lie on the Cytoplasmic side of the membrane.

As to quaternary structure, heterodimer with PDIA3; disulfide-linked. Obligatory mediator for the interaction between newly assembled MHC class I molecules, calreticulin, PDIA3 and TAP. Up to 4 MHC class I/tapasin complexes bind to 1 TAP. Interacts with HLA-G-B2M complex; this interaction is required for loading of high affinity peptides. On its own or as part of MHC class I peptide loading complex, interacts with ligand-free MR1 or MR1-B2M complex, providing for stable MR1 pools ready for metabolite antigen processing.

The protein localises to the endoplasmic reticulum membrane. Involved in the association of MHC class I with transporter associated with antigen processing (TAP) and in the assembly of MHC class I with peptide (peptide loading). This chain is Tapasin (TAPBP), found in Canis lupus familiaris (Dog).